Consider the following 657-residue polypeptide: Pentatricopeptide repeat-containing protein At5g44230 (657 aa).

12 PPR repeats span residues 45 to 79 (KELL…GLDQ), 80 to 112 (SCYI…VQFR), 113 to 147 (NPFL…EITP), 148 to 178 (VSFT…TFRL), 183 to 213 (FVYV…MPER), 214 to 244 (DVIS…LPTK), 245 to 279 (DMVA…GIRA), 280 to 314 (DEVT…GYSP), 317 to 347 (HVVI…MNNK), 348 to 383 (NVFT…EIKP), 384 to 419 (NTVT…GVQP), and 420 to 450 (TRDH…MSVE). Positions 455 to 530 (VWGALLGACR…TPAVSWVVDK (76 aa)) are type E motif. The tract at residues 532–562 (GQMHKFFPGNLNHPMSNKIQDKLEELVERLT) is type E(+) motif. A type DYW motif region spans residues 563–657 (VLGYQPDLSS…SGDCSCGDFW (95 aa)).

Belongs to the PPR family. PCMP-H subfamily.

The chain is Pentatricopeptide repeat-containing protein At5g44230 (PCMP-H17) from Arabidopsis thaliana (Mouse-ear cress).